The sequence spans 465 residues: Light-independent protochlorophyllide reductase subunit N (465 aa).

[4Fe-4S] cluster is bound by residues cysteine 22, cysteine 47, and cysteine 107.

The protein belongs to the BchN/ChlN family. As to quaternary structure, protochlorophyllide reductase is composed of three subunits; ChlL, ChlN and ChlB. Forms a heterotetramer of two ChlB and two ChlN subunits. It depends on [4Fe-4S] cluster as a cofactor.

Its subcellular location is the plastid. The protein resides in the chloroplast. The catalysed reaction is chlorophyllide a + oxidized 2[4Fe-4S]-[ferredoxin] + 2 ADP + 2 phosphate = protochlorophyllide a + reduced 2[4Fe-4S]-[ferredoxin] + 2 ATP + 2 H2O. The protein operates within porphyrin-containing compound metabolism; chlorophyll biosynthesis (light-independent). Its function is as follows. Component of the dark-operative protochlorophyllide reductase (DPOR) that uses Mg-ATP and reduced ferredoxin to reduce ring D of protochlorophyllide (Pchlide) to form chlorophyllide a (Chlide). This reaction is light-independent. The NB-protein (ChlN-ChlB) is the catalytic component of the complex. This Marchantia polymorpha (Common liverwort) protein is Light-independent protochlorophyllide reductase subunit N.